The chain runs to 421 residues: Serine hydroxymethyltransferase (421 aa).

(6S)-5,6,7,8-tetrahydrofolate-binding positions include Leu121 and 125 to 127 (GHL). Lys229 is subject to N6-(pyridoxal phosphate)lysine.

Belongs to the SHMT family. In terms of assembly, homodimer. It depends on pyridoxal 5'-phosphate as a cofactor.

It is found in the cytoplasm. The enzyme catalyses (6R)-5,10-methylene-5,6,7,8-tetrahydrofolate + glycine + H2O = (6S)-5,6,7,8-tetrahydrofolate + L-serine. It participates in one-carbon metabolism; tetrahydrofolate interconversion. It functions in the pathway amino-acid biosynthesis; glycine biosynthesis; glycine from L-serine: step 1/1. In terms of biological role, catalyzes the reversible interconversion of serine and glycine with tetrahydrofolate (THF) serving as the one-carbon carrier. This reaction serves as the major source of one-carbon groups required for the biosynthesis of purines, thymidylate, methionine, and other important biomolecules. Also exhibits THF-independent aldolase activity toward beta-hydroxyamino acids, producing glycine and aldehydes, via a retro-aldol mechanism. The sequence is that of Serine hydroxymethyltransferase from Haemophilus influenzae (strain PittEE).